Here is a 464-residue protein sequence, read N- to C-terminus: MAKVISQDTFDDVVKENVVEFSMTPSEAKEETIKQFEAQGINLANIIKDLSVNPQTGQPVINETVDKIKEHIGQKLEETTELLEQLATLDAECKKSLAHRVLAGKNGAHDALITLLEETLSAESPNESVLKKSLEAINSLTHKQPDLFDAEAMAVVLKLLALKVESEEVTLLTLQWLQKACIMHEMNRQNIMNTSALKLMKPLLGKGKDRLVRELTAVFRFLVLDDDIRVEFGCAHEHARQIAGEVLITLVELLPAYQDPNVLADLLLTIGTLAVRQELCTAIDEAGGLKSVFEIMSSNLDEVRLNREALKLLRALAGQDSVKSHIVQQGVAPIIKQLLETHQSNENIVAAALACVTTLTLRVQEHSAAFFDTGIAEVIVEALRAHPKHKIVQRNGAWAIRNMVSRSRNQCETWISFGVEDLLNMAMKEHPSVEQDIKAALRDLGCSVHLREEWTGTAEKKIAA.

Thr-9 bears the Phosphothreonine mark. ARM repeat units lie at residues 235–275 (AHEH…TLAV), 287–331 (GGLK…QQGV), 332–374 (APII…FDTG), and 375–418 (IAEV…ISFG).

The protein belongs to the ARMC6 family.

This is Armadillo repeat-containing protein 6 homolog from Drosophila melanogaster (Fruit fly).